Here is a 316-residue protein sequence, read N- to C-terminus: tRNA dimethylallyltransferase (316 aa).

Residue 17 to 24 (GPTASGKT) participates in ATP binding. Substrate is bound at residue 19–24 (TASGKT). 4 interaction with substrate tRNA regions span residues 42 to 45 (DSAL), 166 to 170 (QRLSR), 247 to 252 (RCVGYR), and 280 to 287 (KRQITWLR).

It belongs to the IPP transferase family. As to quaternary structure, monomer. Mg(2+) serves as cofactor.

It catalyses the reaction adenosine(37) in tRNA + dimethylallyl diphosphate = N(6)-dimethylallyladenosine(37) in tRNA + diphosphate. Its function is as follows. Catalyzes the transfer of a dimethylallyl group onto the adenine at position 37 in tRNAs that read codons beginning with uridine, leading to the formation of N6-(dimethylallyl)adenosine (i(6)A). The chain is tRNA dimethylallyltransferase from Escherichia coli O157:H7.